The sequence spans 281 residues: Aliphatic sulfonates import ATP-binding protein SsuB (281 aa).

The ABC transporter domain occupies 40–263 (LTLRNLRKSF…RRGSADLAAL (224 aa)). 72-79 (GRSGCGKS) serves as a coordination point for ATP.

This sequence belongs to the ABC transporter superfamily. Aliphatic sulfonates importer (TC 3.A.1.17.2) family. As to quaternary structure, the complex is composed of two ATP-binding proteins (SsuB), two transmembrane proteins (SsuC) and a solute-binding protein (SsuA).

The protein localises to the cell inner membrane. It carries out the reaction ATP + H2O + aliphatic sulfonate-[sulfonate-binding protein]Side 1 = ADP + phosphate + aliphatic sulfonateSide 2 + [sulfonate-binding protein]Side 1.. Part of the ABC transporter complex SsuABC involved in aliphatic sulfonates import. Responsible for energy coupling to the transport system. This Rhodopseudomonas palustris (strain BisA53) protein is Aliphatic sulfonates import ATP-binding protein SsuB.